A 499-amino-acid chain; its full sequence is ADP,ATP carrier protein 5 (499 aa).

Helical transmembrane passes span 25-45, 61-81, 93-113, 148-168, 183-203, 223-243, 286-306, 327-347, 356-376, 380-400, and 468-488; these read LGKFIPMSALMFCILFNQNIL, IAGFAKVYCVTPAAALFVIIY, IFYYLSAFFISFFVLFAFVIY, YIVYYSLAELWPNIFYVLLFW, FYTFFSLFGNSSLILVGFLMM, ITLVQVSTTIVAIVAIVCCVL, LWLLLICSAAFGFAINLVEAV, LYILWTGVAIMVMTIIGNNVM, AVISPVIIMVTGILFFVLIVF, ILSLFDGAILMSPLALAVSIG, and SISPILMVVFTFVCLAWIYAV.

It belongs to the ADP/ATP translocase tlc family.

Its subcellular location is the cell membrane. Functionally, provides the rickettsial cell with host ATP in exchange for rickettsial ADP. This is an obligate exchange system. This energy acquiring activity is an important component of rickettsial parasitism. The chain is ADP,ATP carrier protein 5 (tlcE) from Rickettsia felis (strain ATCC VR-1525 / URRWXCal2) (Rickettsia azadi).